Reading from the N-terminus, the 200-residue chain is MKFLLFCCLFGTFLATGMCIDCEHCVVWGQNCTGWKETCGENEDTCVTYQTEVIRPPLSITFTAKTCGTSDTCHLDYVEANPHTELTLRAKRACCTGDECQTLPPPVLEPQVNRPNGLQCPGCIGLTSTECNEYLVSCQGSENQCLTIILKKPDFSLSEMSFKGCASENLCLLFEKKFWRFLEASEVDVKCTPAVPQTSQ.

Residues 1–19 (MKFLLFCCLFGTFLATGMC) form the signal peptide. Disulfide bonds link Cys-22-Cys-46, Cys-25-Cys-32, Cys-39-Cys-67, Cys-73-Cys-94, Cys-95-Cys-100, Cys-120-Cys-145, Cys-138-Cys-165, and Cys-171-Cys-191. Asn-31 is a glycosylation site (N-linked (GlcNAc...) asparagine).

The protein belongs to the CNF-like-inhibitor family. In terms of assembly, heterodimer of subunit A and subunit B. In terms of processing, N-glycosylated. As to expression, expressed by the liver. Not expressed in esophagus, stomach, pancreas, spleen, gall bladder, small intestine, rectum, kidney, trachea, lung, testis and body fat.

The protein resides in the secreted. Inhibits the enzymatic activity of phospholipase A2 (PA2). In Elaphe quadrivirgata (Japanese four-lined ratsnake), this protein is Phospholipase A2 inhibitor gamma subunit B.